We begin with the raw amino-acid sequence, 557 residues long: Copine-7 (557 aa).

C2 domains are found at residues 1–128 (MSGD…TRPL) and 135–263 (NAGK…AQWD). Residues Asp168, Asp174, Asp230, Asp232, and Asp238 each contribute to the Ca(2+) site. The VWFA domain occupies 306-505 (HCTVAIDFTA…PALRDIVQFV (200 aa)).

Belongs to the copine family. It depends on Ca(2+) as a cofactor.

It is found in the cytoplasm. The protein localises to the nucleus. Its subcellular location is the cell membrane. Its function is as follows. Calcium-dependent phospholipid-binding protein that may play a role in calcium-mediated intracellular processes. This Mus musculus (Mouse) protein is Copine-7.